The primary structure comprises 630 residues: Eukaryotic translation initiation factor 2-alpha kinase 1 (630 aa).

Residues 1–40 form a disordered region; it reads MQGGNSGVRKREEEGDGAGAVAAPPAIDFPAEGPDPEYDE. The SIFI-degron signature appears at 85 to 104; sequence LRSRQVFKLLCQTFIKMGLL. A Protein kinase domain is found at 167-583; sequence FEELAILGKG…AIQLLQSELF (417 aa). Residues 173 to 181 and lysine 196 each bind ATP; that span reads LGKGGYGRV. The interval 259–301 is disordered; that stretch reads DQEEDREQCGVKNDESSSSSIIFAEPTPEKEKRFGESDTENQN. At threonine 285 the chain carries Phosphothreonine. Residues 285-294 are compositionally biased toward basic and acidic residues; it reads TPEKEKRFGE. Residues 410 to 415 form an HRM 1 repeat; it reads ACPYVM. Aspartate 442 serves as the catalytic Proton acceptor. Threonine 486 and threonine 488 each carry phosphothreonine; by autocatalysis. Position 493 is a phosphothreonine (threonine 493). An HRM 2 repeat occupies 552-557; sequence RCPVQA.

It belongs to the protein kinase superfamily. Ser/Thr protein kinase family. GCN2 subfamily. Synthesized in an inactive form that binds to the N-terminal domain of CDC37. Has to be associated with a multiprotein complex containing Hsp90, CDC37 and PPP5C for maturation and activation by autophosphorylation. The phosphatase PPP5C modulates this activation. Homodimer; homodimerizes in presence of heme, forming a disulfide-linked inactive homodimer. Interacts with DELE1; binds both to full-length DELE1 and processed form of DELE1 (S-DELE1) in response to stress, leading to activate its protein kinase activity and trigger the integrated stress response (ISR). Post-translationally, activated by autophosphorylation; phosphorylated predominantly on serine and threonine residues, but also on tyrosine residues. Autophosphorylation at Thr-488 is required for kinase activation. The active autophosphorylated form apparently is largely refractory to cellular heme fluctuations. Ubiquitinated and degraded by the SIFI complex once the mitochondrial stress has been resolved, thereby providing stress response silencing. Within the SIFI complex, UBR4 initiates ubiquitin chain that are further elongated or branched by KCMF1.

It catalyses the reaction L-seryl-[protein] + ATP = O-phospho-L-seryl-[protein] + ADP + H(+). The enzyme catalyses L-threonyl-[protein] + ATP = O-phospho-L-threonyl-[protein] + ADP + H(+). In normal conditions, the protein kinase activity is inhibited; inhibition is relieved by various stress conditions. Inhibited by heme: in presence of heme, forms a disulfide-linked inactive homodimer. Heme depletion relieves inhibition and stimulates kinase activity by autophosphorylation. Inhibited by the heme metabolites biliverdin and bilirubin. Induced by oxidative stress generated by arsenite treatment. Binding of nitric oxide (NO) to the heme iron in the N-terminal heme-binding domain activates the kinase activity, while binding of carbon monoxide (CO) suppresses kinase activity. Protein kinase activity is also activated upon binding to DELE1 in response to various stress, triggering the integrated stress response (ISR): activated by full-length DELE1 in response to iron deficiency, while it is activated by the processed form of DELE1 (S-DELE1) in response to mitochondrial stress. Metabolic-stress sensing protein kinase that phosphorylates the alpha subunit of eukaryotic translation initiation factor 2 (EIF2S1/eIF-2-alpha) in response to various stress conditions. Key activator of the integrated stress response (ISR) required for adaptation to various stress, such as heme deficiency, oxidative stress, osmotic shock, mitochondrial dysfunction and heat shock. EIF2S1/eIF-2-alpha phosphorylation in response to stress converts EIF2S1/eIF-2-alpha in a global protein synthesis inhibitor, leading to a global attenuation of cap-dependent translation, while concomitantly initiating the preferential translation of ISR-specific mRNAs, such as the transcriptional activator ATF4, and hence allowing ATF4-mediated reprogramming. Acts as a key sensor of heme-deficiency: in normal conditions, binds hemin via a cysteine thiolate and histidine nitrogenous coordination, leading to inhibit the protein kinase activity. This binding occurs with moderate affinity, allowing it to sense the heme concentration within the cell: heme depletion relieves inhibition and stimulates kinase activity, activating the ISR. Thanks to this unique heme-sensing capacity, plays a crucial role to shut off protein synthesis during acute heme-deficient conditions. In red blood cells (RBCs), controls hemoglobin synthesis ensuring a coordinated regulation of the synthesis of its heme and globin moieties. It thereby plays an essential protective role for RBC survival in anemias of iron deficiency. Iron deficiency also triggers activation by full-length DELE1. Also activates the ISR in response to mitochondrial dysfunction: HRI/EIF2AK1 protein kinase activity is activated upon binding to the processed form of DELE1 (S-DELE1), thereby promoting the ATF4-mediated reprogramming. Also acts as an activator of mitophagy in response to mitochondrial damage: catalyzes phosphorylation of eIF-2-alpha (EIF2S1) following activation by S-DELE1, thereby promoting mitochondrial localization of EIF2S1, triggering PRKN-independent mitophagy. The polypeptide is Eukaryotic translation initiation factor 2-alpha kinase 1 (Homo sapiens (Human)).